The chain runs to 411 residues: MSQKSDLRNRIKFTLLLLVLARLGIFIPVPGIDHDAFYASVEKNTLVNFLNIFSGGGFSTIGIFALGIVPYINSSIVMQLLTKIIPDLEKLQKEEGELGRQKITQITRYLALGWATLQSGAISIWVKPYVFNWNFTFVCESVLALTAGSMIIMWLSELITEKGIGNGASLLIFQNIVSGLPKNFTQSFFDANYSNTSIKFGLFIVIFLLMIIITIFVQEGTRRIKIISARQLGKSSILDPNSYLPLKLNQGGVMPIVFASASMALPAYLTQLTQNTFLLQVLYLFCPNGSLYLVLYSVLILFFSYFYTSIVMNPEDIATNLKKMGASIPNIRPGQATIDYLQVILNRLTFLGATFLFTVALIPFIIEKVAQIQNLRGLGATSLLILVGVAIDTAKQIQTYVISKKYDSMTK.

10 helical membrane-spanning segments follow: residues 13 to 33 (FTLL…PGID), 52 to 72 (IFSG…VPYI), 111 to 131 (ALGW…PYVF), 135 to 155 (FTFV…IMWL), 163 to 180 (GIGN…VSGL), 197 to 217 (SIKF…TIFV), 252 to 272 (GVMP…LTQL), 291 to 311 (LYLV…TSIV), 350 to 370 (FLGA…EKVA), and 377 to 397 (GLGA…AKQI).

It belongs to the SecY/SEC61-alpha family. Component of the plastid Sec protein translocase complex, which is composed of at least SecY, SecE and SecG.

It localises to the plastid. The protein resides in the chloroplast thylakoid membrane. The central subunit of the protein translocation channel SecYE. Consists of two halves formed by TMs 1-5 and 6-10. These two domains form a lateral gate at the front which open onto the bilayer between TMs 2 and 7, and are clamped together by SecE at the back. The channel is closed by both a pore ring composed of hydrophobic SecY resides and a short helix (helix 2A) on the extracellular side of the membrane which forms a plug. The polypeptide is Protein translocase subunit SecY (Porphyra purpurea (Red seaweed)).